The primary structure comprises 201 residues: Ribonuclease HII (201 aa).

Residues 15-201 (QRVAGVDEVG…FRPVRRFLEA (187 aa)) form the RNase H type-2 domain. 3 residues coordinate a divalent metal cation: Asp-21, Glu-22, and Asp-113.

It belongs to the RNase HII family. It depends on Mn(2+) as a cofactor. Mg(2+) serves as cofactor.

The protein localises to the cytoplasm. It carries out the reaction Endonucleolytic cleavage to 5'-phosphomonoester.. Functionally, endonuclease that specifically degrades the RNA of RNA-DNA hybrids. The protein is Ribonuclease HII of Nitrosococcus oceani (strain ATCC 19707 / BCRC 17464 / JCM 30415 / NCIMB 11848 / C-107).